Consider the following 920-residue polypeptide: Periplasmic nitrate reductase (920 aa).

The tat-type signal signal peptide spans 1-29 (MNRRDFIKSTAAAAACASAGIALPANLNA). A 4Fe-4S Mo/W bis-MGD-type domain is found at 35–91 (WRWDKAVCRFCGTGCGIMVATKNGKIVAVKGDPEAPVNRGLNCIKGYFNAKIMYGDD). Positions 42, 45, 49, and 77 each coordinate [4Fe-4S] cluster. Mo-bis(molybdopterin guanine dinucleotide)-binding positions include lysine 79, glutamine 147, asparagine 172, cysteine 176, 209-216 (WGANMAEM), methionine 416, glutamine 420, asparagine 526, 551-552 (SD), lysine 574, aspartate 601, and 810-819 (TGRVLEHWHS). Tryptophan 886 contributes to the substrate binding site. Positions 894 and 911 each coordinate Mo-bis(molybdopterin guanine dinucleotide).

Belongs to the prokaryotic molybdopterin-containing oxidoreductase family. NasA/NapA/NarB subfamily. Component of the periplasmic nitrate reductase NapAB complex composed of NapA and NapB. [4Fe-4S] cluster serves as cofactor. It depends on Mo-bis(molybdopterin guanine dinucleotide) as a cofactor. In terms of processing, predicted to be exported by the Tat system. The position of the signal peptide cleavage has not been experimentally proven.

Its subcellular location is the periplasm. It carries out the reaction 2 Fe(II)-[cytochrome] + nitrate + 2 H(+) = 2 Fe(III)-[cytochrome] + nitrite + H2O. Catalytic subunit of the periplasmic nitrate reductase complex NapAB. Receives electrons from NapB and catalyzes the reduction of nitrate to nitrite. The polypeptide is Periplasmic nitrate reductase (Campylobacter hominis (strain ATCC BAA-381 / DSM 21671 / CCUG 45161 / LMG 19568 / NCTC 13146 / CH001A)).